A 315-amino-acid polypeptide reads, in one-letter code: Ribose-phosphate pyrophosphokinase (315 aa).

ATP is bound by residues 37 to 39 (DGE) and 96 to 97 (RQ). The Mg(2+) site is built by His131 and Asp170. Lys194 is a catalytic residue. D-ribose 5-phosphate is bound by residues Arg196, Asp220, and 224–228 (DTGGT).

Belongs to the ribose-phosphate pyrophosphokinase family. Class I subfamily. Homohexamer. Mg(2+) is required as a cofactor.

Its subcellular location is the cytoplasm. It catalyses the reaction D-ribose 5-phosphate + ATP = 5-phospho-alpha-D-ribose 1-diphosphate + AMP + H(+). It participates in metabolic intermediate biosynthesis; 5-phospho-alpha-D-ribose 1-diphosphate biosynthesis; 5-phospho-alpha-D-ribose 1-diphosphate from D-ribose 5-phosphate (route I): step 1/1. Involved in the biosynthesis of the central metabolite phospho-alpha-D-ribosyl-1-pyrophosphate (PRPP) via the transfer of pyrophosphoryl group from ATP to 1-hydroxyl of ribose-5-phosphate (Rib-5-P). This is Ribose-phosphate pyrophosphokinase from Photorhabdus laumondii subsp. laumondii (strain DSM 15139 / CIP 105565 / TT01) (Photorhabdus luminescens subsp. laumondii).